A 279-amino-acid chain; its full sequence is DegV domain-containing protein SACOL1460 (279 aa).

The region spanning Gln4 to Lys278 is the DegV domain. The hexadecanoate site is built by Thr61 and Ser93.

Its function is as follows. May bind long-chain fatty acids, such as palmitate, and may play a role in lipid transport or fatty acid metabolism. This chain is DegV domain-containing protein SACOL1460, found in Staphylococcus aureus (strain COL).